The primary structure comprises 481 residues: MAAVNGVGLSWPSKLTKNQTPKWGFSPSHRRCNPSSSSSATIRMTASVDEKKKTFTLEKSEEAFSKAKELMPGGVNSPVRAFKSVGGQPIIIDSVKGSRMRDIDGNEYIDYVGSWGPAIIGHADDEVLAALAETMKKGTSFGAPCLLENTLAEMVISAVPSIEMVRFVNSGTEACMGVLRLARAFTCRPKIIKFEGCYHGHADPFLVKAGSGVATLGLPDSPGVPKAATIDTLTAPYNDISAVESLFEEHKGEIAAVILEPVVGNAGFIPPKLEFLAAIRKITKENDALLIFDEVMTGFRLAYGGAQEYFGITPDLTTLGKIIGGGLPVGAYGGRRDIMEMVAPAGPMYQAGTLSGNPLAMTAGIHTLKRLQGQGTYEHLDKITAELTQGILDAGKKTGHAMCGGSIRGMFGFFFADGPIYNFSDAKKSDTEKFGRFYRGMLEEGVYFAPSQFEAGFTSLAHTPEDIQRTVAAAEKVLKQI.

Residues 18 to 40 (NQTPKWGFSPSHRRCNPSSSSSA) are disordered. An N6-(pyridoxal phosphate)lysine modification is found at Lys321.

It belongs to the class-III pyridoxal-phosphate-dependent aminotransferase family. HemL subfamily. Homodimer. It depends on pyridoxal 5'-phosphate as a cofactor.

It is found in the plastid. The protein resides in the chloroplast. The catalysed reaction is (S)-4-amino-5-oxopentanoate = 5-aminolevulinate. Its pathway is porphyrin-containing compound metabolism; protoporphyrin-IX biosynthesis; 5-aminolevulinate from L-glutamyl-tRNA(Glu): step 2/2. The protein operates within porphyrin-containing compound metabolism; chlorophyll biosynthesis. This is Glutamate-1-semialdehyde 2,1-aminomutase, chloroplastic from Solanum lycopersicum (Tomato).